The following is a 277-amino-acid chain: Large ribosomal subunit protein uL2 (277 aa).

Residues 222 to 277 (GSVMNPNDHPHGGGEGKSPVGHPGPLTPWGKPALGLKTRKNKKYSDKFIIKRKNKK) are disordered.

The protein belongs to the universal ribosomal protein uL2 family. In terms of assembly, part of the 50S ribosomal subunit. Forms a bridge to the 30S subunit in the 70S ribosome.

Its function is as follows. One of the primary rRNA binding proteins. Required for association of the 30S and 50S subunits to form the 70S ribosome, for tRNA binding and peptide bond formation. It has been suggested to have peptidyltransferase activity; this is somewhat controversial. Makes several contacts with the 16S rRNA in the 70S ribosome. The sequence is that of Large ribosomal subunit protein uL2 from Clostridium kluyveri (strain NBRC 12016).